A 328-amino-acid chain; its full sequence is Ubiquitin-conjugating enzyme E2 Z (328 aa).

A UBC core domain is found at 71–225; sequence QCILRIKRDI…IRHETMRVAV (155 aa). The active-site Glycyl thioester intermediate is the Cys160. The disordered stretch occupies residues 295–328; the sequence is RLREKCPPEDNDGDSDSDTSSSGTDPDSQGSSQP. Residues 312–328 show a composition bias toward low complexity; it reads DTSSSGTDPDSQGSSQP.

Belongs to the ubiquitin-conjugating enzyme family.

Its subcellular location is the cytoplasm. The protein resides in the nucleus. It catalyses the reaction S-ubiquitinyl-[E1 ubiquitin-activating enzyme]-L-cysteine + [E2 ubiquitin-conjugating enzyme]-L-cysteine = [E1 ubiquitin-activating enzyme]-L-cysteine + S-ubiquitinyl-[E2 ubiquitin-conjugating enzyme]-L-cysteine.. It participates in protein modification; protein ubiquitination. In terms of biological role, catalyzes the covalent attachment of ubiquitin to other proteins. May be involved in apoptosis regulation. The sequence is that of Ubiquitin-conjugating enzyme E2 Z (ube2z) from Danio rerio (Zebrafish).